A 681-amino-acid chain; its full sequence is MGNPGDRVSLGETWSREVHPDIDSERHSPSFSVERLTNILDGGIPNTELRRRVESLIQRDPVFNLKHLYFMTRDELYEDAVQKRFHLEKLAWSLGWSEDGPERIYADRVLAGYNNLNLHGIAMNAIRSLGSDEQIAKWGQLGKNFQIITTYAQTELGHGTYLQGLETEATYDATTQEFVIHSPTMTSIKWWPGDLGRTVTHAVVLAHLICLGARHGMHAFIVPIRSLEDHTPLPGITVGDIGPKMGFENIDNGFLRLNHVRVPRENMLSRFAEVLPDGTYQRLGTPQSNYLGMLVTRVQLLYKGFLPTLQKACTIAVRYAVIRHQSRLRPSDPEAKILEYQTQQQKLLPQLAVSYALHFMTTSLLQFFHSSYSDILKRDFSLLPELHALSTGMKAMSSDFCAQGTEICRRACGGHGYSKLSGLPTLVTQAIASCTYEGENTVLYLQVARFLMKSYLQAQVSPGSIPQKPLPQSVMYLATPRPARCPAQTAADFRCPEVYTTAWAYVSARLIRDATQHTQTLMRSGVDQYDAWNQTSVIHLQAAKAHCYFLTVRNFKEAVEKLDNEPEIQRVLQNLCDLYALNGILTNSGDFLHDGFLSGAQVDMARTAFLDLLPLIRKDAILLTDAFDFSDHCLNSALGCYDGHVYQRLFEWAQKSPANTQENPAYKKYIRPLMQSWKPKL.

Residues 1–28 are disordered; that stretch reads MGNPGDRVSLGETWSREVHPDIDSERHS. Position 9 is a phosphoserine (Ser9). Position 13 is a phosphothreonine (Thr13). Basic and acidic residues predominate over residues 14 to 28; sequence WSREVHPDIDSERHS. Residues Lys66, Lys137, Lys303, Lys453, Lys561, and Lys667 each carry the N6-succinyllysine modification. Positions 679–681 match the Microbody targeting signal motif; that stretch reads PKL.

Belongs to the acyl-CoA oxidase family. Homodimer. Requires FAD as cofactor. In terms of processing, acetylation of Lys-667 is observed in liver mitochondria from fasted mice but not from fed mice.

The protein resides in the peroxisome. The catalysed reaction is (25R)-3alpha,7alpha,12alpha-trihydroxy-5beta-cholestan-26-oyl-CoA + A + H2O = (24R,25R)-3alpha,7alpha,12alpha,24-tetrahydroxy-5beta-cholestan-26-oyl-CoA + AH2. It catalyses the reaction (25S)-3alpha,7alpha,12alpha-trihydroxy-5beta-cholestan-26-oyl-CoA + O2 = (24E)-3alpha,7alpha,12alpha-trihydroxy-5beta-cholest-24-en-26-oyl-CoA + H2O2. Its function is as follows. Oxidizes the CoA esters of the bile acid intermediates di- and tri-hydroxycoprostanic acids. Capable of oxidizing short as well as long chain 2-methyl branched fatty acids. The protein is Peroxisomal acyl-coenzyme A oxidase 2 of Mus musculus (Mouse).